The following is a 371-amino-acid chain: Thyroid transcription factor 1 (371 aa).

The segment at residues 161–220 (RRKRRVLFSQAQVYELERRFKQQKYLSAPEREHLASMIHLTPTQVKIWFQNHRYKMKRQA) is a DNA-binding region (homeobox). Disordered regions lie at residues 219-294 (QAKD…QQQA) and 308-342 (SGGPGLGAHPGHQPGSAGQSPDLAHHAASPAALQG). Residues 233 to 243 (SGGGGGGGGAG) are compositionally biased toward gly residues. Low complexity-rich tracts occupy residues 244–253 (CPQQQQAQQQ) and 272–294 (AGAPAPGAGSLQGHAQQQAQQQA).

It belongs to the NK-2 homeobox family. Phosphorylated on serine residues. As to expression, thyroid, lung and CNS.

The protein localises to the nucleus. Its function is as follows. Transcription factor that binds and activates the promoter of thyroid specific genes such as thyroglobulin, thyroperoxidase, and thyrotropin receptor. Crucial in the maintenance of the thyroid differentiation phenotype. May play a role in lung development and surfactant homeostasis. The polypeptide is Thyroid transcription factor 1 (TITF1) (Canis lupus familiaris (Dog)).